The primary structure comprises 515 residues: Maturase K (515 aa).

Belongs to the intron maturase 2 family. MatK subfamily.

It is found in the plastid. It localises to the chloroplast. Its function is as follows. Usually encoded in the trnK tRNA gene intron. Probably assists in splicing its own and other chloroplast group II introns. This is Maturase K from Ceratophyllum demersum (Rigid hornwort).